The primary structure comprises 492 residues: uncharacterized protein (492 aa).

Residues 30–46 (YVCLSVAVAAVGYANYM) traverse the membrane as a helical segment. The J domain maps to 144 to 210 (NYYDVLNVNE…IRKNIYDNEG (67 aa)).

Its subcellular location is the membrane. This is an uncharacterized protein from Plasmodium falciparum (isolate 3D7).